The following is a 423-amino-acid chain: Phaseolin (423 aa).

An N-terminal signal peptide occupies residues 1–21; that stretch reads RRVPLLLLGILFLASLSASFA. Asparagine 28 is a glycosylation site (N-linked (GlcNAc...) asparagine). 2 consecutive Cupin type-1 domains span residues 35–193 and 228–383; these read FYFS…EKIN and KSLD…EDVQ. 4 N-linked (GlcNAc...) asparagine glycosylation sites follow: asparagine 243, asparagine 332, asparagine 390, and asparagine 396. A disordered region spans residues 397-423; it reads GSYHKNAHPHEQEQQKQQKGRKGAFVY. A compositionally biased stretch (basic residues) spans 414–423; the sequence is QKGRKGAFVY.

It belongs to the 7S seed storage protein family. In terms of assembly, homotrimer.

It localises to the vacuole. Its subcellular location is the aleurone grain. Major seed storage protein. This Phaseolus lunatus (Lima bean) protein is Phaseolin (PHS).